We begin with the raw amino-acid sequence, 358 residues long: Nicotinate-nucleotide--dimethylbenzimidazole phosphoribosyltransferase (358 aa).

E314 acts as the Proton acceptor in catalysis.

This sequence belongs to the CobT family.

The catalysed reaction is 5,6-dimethylbenzimidazole + nicotinate beta-D-ribonucleotide = alpha-ribazole 5'-phosphate + nicotinate + H(+). Its pathway is nucleoside biosynthesis; alpha-ribazole biosynthesis; alpha-ribazole from 5,6-dimethylbenzimidazole: step 1/2. In terms of biological role, catalyzes the synthesis of alpha-ribazole-5'-phosphate from nicotinate mononucleotide (NAMN) and 5,6-dimethylbenzimidazole (DMB). This Mycobacterium marinum (strain ATCC BAA-535 / M) protein is Nicotinate-nucleotide--dimethylbenzimidazole phosphoribosyltransferase.